Here is a 35-residue protein sequence, read N- to C-terminus: Delta-theraphotoxin-Hm1a (35 aa).

3 disulfide bridges follow: Cys2/Cys16, Cys9/Cys21, and Cys15/Cys28.

This sequence belongs to the neurotoxin 10 (Hwtx-1) family. 09 (HaTx) subfamily. As to expression, expressed by the venom gland.

It localises to the secreted. Gating-modifier toxin that potently inhibits inactivation of the mammalian Nav1.1/SCN1A sodium channel (EC(50)=38 nM). Also moderately inhibits inactivation of Nav1.2/SCN2A (EC(50)=236 nM) and Nav1.3/SCN3A (EC(50)=220 nM) when the channels are expressed in oocytes without the beta-1 auxiliary subunit. Does not inhibit inactivation of Nav1.2/SCN2A when the channel is coexpressed with the beta-1 auxiliary subunit. When tested on Nav1.1/SCN1A channel, it enhances peak current amplitude and potently delays channel inactivation in a dose-dependent manner, leading to a large sustained current. It has no effect on the voltage-dependence of steady-state activation, and induces a depolarizing shift in the voltage dependence of inactivation. In addition, it does not modify the recovery from fast inactivation in Nav1.1/SCN1A. The binding affinity and subtype selectivity of the toxin towards Nav1.1/SCN1A channel is determined by residues within both the S1-S2 and S3-S4 loops of the domain IV voltage sensor of the channel. This toxin also weakly inhibits several subtypes of voltage-gated potassium channels. It moderately blocks Kv2.1/KCNB1 (23% inhibition at 100 nM), Kv2.2/KCNB2 (19.7% at 100 nM and 51% at 300 nM), Kv4.1/KCND1 (IC(50)=280 nM), Kv4.2/KCND2 (39% at 300 nM) and Kv4.3/KCND3 (43% at 300 nM). In vivo, intracerebroventricular injection into mice elicits convulsions, spasms, tremors and rapid death. When injected into mouse hindpaw, the toxin elicits an immediate and robust response to pain. However, intraplantar injection of toxin does not cause neurogenic inflammation or alter sensitivity to heat, indicative of a modality-specific effect on mechanosensitive neurons. In Dravet syndrome mice model, intracerebroventricular infusion of this peptide rescues mice from seizures and premature death. This Heteroscodra maculata (Togo starburst tarantula) protein is Delta-theraphotoxin-Hm1a.